The following is a 135-amino-acid chain: Snaclec echicetin subunit alpha (135 aa).

An N-terminal signal peptide occupies residues 1–4 (GADE). Disulfide bonds link Cys-6–Cys-17, Cys-34–Cys-129, and Cys-104–Cys-121. The 118-residue stretch at 13–130 (NGVYCYMLFK…CENTFPFMCK (118 aa)) folds into the C-type lectin domain.

Belongs to the snaclec family. In terms of assembly, heterodimer of subunits alpha and beta; disulfide-linked. In terms of tissue distribution, expressed by the venom gland.

It localises to the secreted. Functionally, binding of echicetin to GPIbalpha (GP1BA) receptor on platelets alone results in inhibition of platelet aggregation, while binding to both GP1BA receptor and IgMk promotes platelet aggregation and signal transduction. This Echis carinatus (Saw-scaled viper) protein is Snaclec echicetin subunit alpha.